Consider the following 90-residue polypeptide: Bombyxin B-6 (90 aa).

The first 20 residues, 1-20, serve as a signal peptide directing secretion; it reads MMKTSVMFMLVVVISLMCSS. 3 cysteine pairs are disulfide-bonded: Cys30–Cys76, Cys42–Cys89, and Cys75–Cys80. A propeptide spans 49 to 67 (c peptide like); that stretch reads GVAQYAPYFWTRQYLGSRG.

The protein belongs to the insulin family. Heterodimer of a B chain and an A chain linked by two disulfide bonds.

It is found in the secreted. Functionally, brain peptide responsible for activation of prothoracic glands to produce ecdysone in insects. This Bombyx mori (Silk moth) protein is Bombyxin B-6 (BBXB6).